We begin with the raw amino-acid sequence, 245 residues long: MPDYSYRPTIGRTYVYDNKYYKNLGAVIKNAKRKKHFAEHEIEEATLDPLDNYLVAEDPFLGPGKNQKLTLFKEIRNVKPDTMKLVVGWKGKEFYRETWTRFMEDSFPIVNDQEVMDVFLVVNMRPTRPNRCYKFLAQHALRCDPDYVPHDVIRIVEPSWVGSNNEYRISLAKKGGGCPIMNLHSEYTNSFEQFIDRVIWENFYKPIVYIGTDSAEEEEILLEVSLVFKVKEFAPDAPLFTGPAY.

The tract at residues 32–35 (KRKK) is nuclear localization signal.

The protein belongs to the polyhedrin family.

It localises to the host nucleus. Major component of the virus occlusion bodies which are large proteinaceous structures termed polyhedra. These structures serve as the protective package for the virus particles outside the infected host and allow natural transmission of virus between insect hosts, assisting persistence in the environment. Forms the paracrystalline lattice of polyhedra and interacts with enveloped virions as well as other accessory molecules and structures to form a mature viral occlusion body. This is Polyhedrin (PH) from Lepidoptera (butterflies and moths).